The sequence spans 332 residues: Pyrroline-5-carboxylate reductase (332 aa).

Belongs to the pyrroline-5-carboxylate reductase family.

The catalysed reaction is L-proline + NADP(+) = (S)-1-pyrroline-5-carboxylate + NADPH + 2 H(+). The enzyme catalyses L-proline + NAD(+) = (S)-1-pyrroline-5-carboxylate + NADH + 2 H(+). It participates in amino-acid biosynthesis; L-proline biosynthesis; L-proline from L-glutamate 5-semialdehyde: step 1/1. This is Pyrroline-5-carboxylate reductase (pro-1) from Neurospora crassa (strain ATCC 24698 / 74-OR23-1A / CBS 708.71 / DSM 1257 / FGSC 987).